The sequence spans 225 residues: Uracil-DNA glycosylase (225 aa).

Asp-65 functions as the Proton acceptor in the catalytic mechanism.

This sequence belongs to the uracil-DNA glycosylase (UDG) superfamily. UNG family.

It localises to the cytoplasm. The enzyme catalyses Hydrolyzes single-stranded DNA or mismatched double-stranded DNA and polynucleotides, releasing free uracil.. In terms of biological role, excises uracil residues from the DNA which can arise as a result of misincorporation of dUMP residues by DNA polymerase or due to deamination of cytosine. The sequence is that of Uracil-DNA glycosylase from Bacillus cereus (strain ATCC 10987 / NRS 248).